Consider the following 221-residue polypeptide: Ependymin-2 (221 aa).

An N-terminal signal peptide occupies residues 1-21 (MQDFAFAALSIWLCLGATALA). 3 N-linked (GlcNAc...) asparagine glycosylation sites follow: N33, N73, and N97.

This sequence belongs to the ependymin family. Post-translationally, binds calcium through the terminal sialic acids. As to expression, EPDs are synthesized in the meninx and secreted in the cerebrospinal fluid.

It localises to the secreted. In terms of biological role, may play a role in neural plasticity. May be involved during axon regeneration. This chain is Ependymin-2 (epd2), found in Oncorhynchus mykiss (Rainbow trout).